A 396-amino-acid polypeptide reads, in one-letter code: Elongation factor Tu (396 aa).

The 196-residue stretch at lysine 10 to glutamate 205 folds into the tr-type G domain. The G1 stretch occupies residues glycine 19–threonine 26. Residue glycine 19–threonine 26 participates in GTP binding. Position 26 (threonine 26) interacts with Mg(2+). Residues glycine 62–asparagine 66 are G2. The segment at aspartate 83 to glycine 86 is G3. GTP-binding positions include aspartate 83–histidine 87 and asparagine 138–aspartate 141. Positions asparagine 138–aspartate 141 are G4. Residues serine 175–leucine 177 are G5.

It belongs to the TRAFAC class translation factor GTPase superfamily. Classic translation factor GTPase family. EF-Tu/EF-1A subfamily. Monomer.

The protein resides in the cytoplasm. The catalysed reaction is GTP + H2O = GDP + phosphate + H(+). In terms of biological role, GTP hydrolase that promotes the GTP-dependent binding of aminoacyl-tRNA to the A-site of ribosomes during protein biosynthesis. This is Elongation factor Tu from Corynebacterium aurimucosum (strain ATCC 700975 / DSM 44827 / CIP 107346 / CN-1) (Corynebacterium nigricans).